A 425-amino-acid chain; its full sequence is Serine--tRNA ligase 1 (425 aa).

Residue 230–232 (TSE) coordinates L-serine. ATP is bound by residues 261–263 (RRE) and Val-277. Glu-284 is a binding site for L-serine. 348–351 (ELTS) contacts ATP. Thr-382 contributes to the L-serine binding site.

It belongs to the class-II aminoacyl-tRNA synthetase family. Type-1 seryl-tRNA synthetase subfamily. Homodimer. The tRNA molecule binds across the dimer.

It localises to the cytoplasm. The enzyme catalyses tRNA(Ser) + L-serine + ATP = L-seryl-tRNA(Ser) + AMP + diphosphate + H(+). The catalysed reaction is tRNA(Sec) + L-serine + ATP = L-seryl-tRNA(Sec) + AMP + diphosphate + H(+). It participates in aminoacyl-tRNA biosynthesis; selenocysteinyl-tRNA(Sec) biosynthesis; L-seryl-tRNA(Sec) from L-serine and tRNA(Sec): step 1/1. Its function is as follows. Catalyzes the attachment of serine to tRNA(Ser). Is also able to aminoacylate tRNA(Sec) with serine, to form the misacylated tRNA L-seryl-tRNA(Sec), which will be further converted into selenocysteinyl-tRNA(Sec). The sequence is that of Serine--tRNA ligase 1 from Streptomyces avermitilis (strain ATCC 31267 / DSM 46492 / JCM 5070 / NBRC 14893 / NCIMB 12804 / NRRL 8165 / MA-4680).